The primary structure comprises 512 residues: Maturase K (512 aa).

It belongs to the intron maturase 2 family. MatK subfamily.

It localises to the plastid. The protein localises to the chloroplast. Usually encoded in the trnK tRNA gene intron. Probably assists in splicing its own and other chloroplast group II introns. This is Maturase K from Lilium longiflorum (Trumpet lily).